Here is a 303-residue protein sequence, read N- to C-terminus: N-acetyl-D-glucosamine kinase (303 aa).

ATP is bound by residues 4–11 and 133–140; these read GFDIGGTK and GVGGGLVL. The Zn(2+) site is built by His-157, Cys-177, Cys-179, and Cys-184.

It belongs to the ROK (NagC/XylR) family. NagK subfamily.

It catalyses the reaction N-acetyl-D-glucosamine + ATP = N-acetyl-D-glucosamine 6-phosphate + ADP + H(+). It functions in the pathway cell wall biogenesis; peptidoglycan recycling. Functionally, catalyzes the phosphorylation of N-acetyl-D-glucosamine (GlcNAc) derived from cell-wall degradation, yielding GlcNAc-6-P. The polypeptide is N-acetyl-D-glucosamine kinase (Salmonella agona (strain SL483)).